The sequence spans 137 residues: Small ribosomal subunit protein uS12 (137 aa).

The tract at residues 1–57 is disordered; it reads MPTINQLVRKPRQSKIKKSDSPALNKGFNSKKKKFTDLNSPQKRGVCTRVGTMTPRK. At D102 the chain carries 3-methylthioaspartic acid. The segment at 118–137 is disordered; that stretch reads SGVDGRRQGRSLYGTKKPKN.

It belongs to the universal ribosomal protein uS12 family. Part of the 30S ribosomal subunit. Contacts proteins S8 and S17. May interact with IF1 in the 30S initiation complex.

With S4 and S5 plays an important role in translational accuracy. Its function is as follows. Interacts with and stabilizes bases of the 16S rRNA that are involved in tRNA selection in the A site and with the mRNA backbone. Located at the interface of the 30S and 50S subunits, it traverses the body of the 30S subunit contacting proteins on the other side and probably holding the rRNA structure together. The combined cluster of proteins S8, S12 and S17 appears to hold together the shoulder and platform of the 30S subunit. The chain is Small ribosomal subunit protein uS12 from Staphylococcus aureus (strain COL).